A 147-amino-acid chain; its full sequence is uncharacterized protein (147 aa).

This is an uncharacterized protein from Homo sapiens (Human).